Consider the following 151-residue polypeptide: Neuroglobin (151 aa).

One can recognise a Globin domain in the interval Met-1–Asp-149. Positions 64 and 96 each coordinate heme b.

It belongs to the globin family. In terms of assembly, monomer. Homodimer and homotetramer; disulfide-linked. Mainly monomeric but also detected as part of homodimers and homotetramers. Interacts with 14-3-3 proteins; regulates the phosphorylation of NGB. Could interact (ferrous form) with G-alpha(i) proteins (GTP-bound form). Post-translationally, phosphorylated during hypoxia by ERK1/ERK2. Phosphorylation regulates the heme pocket hexacoordination preventing the association of His-64 with the heme metal center. Thereby, promotes the access of dioxygen and nitrite to the heme and stimulates the nitrite reductase activity. Phosphorylation during hypoxia is stabilized by 14-3-3 proteins.

The protein resides in the cytoplasm. Its subcellular location is the cytosol. It is found in the mitochondrion matrix. The catalysed reaction is Fe(III)-heme b-[protein] + nitric oxide + H2O = Fe(II)-heme b-[protein] + nitrite + 2 H(+). Its function is as follows. Monomeric globin with a bis-histidyl six-coordinate heme-iron atom through which it can bind dioxygen, carbon monoxide and nitric oxide. Could help transport oxygen and increase its availability to the metabolically active neuronal tissues, though its low quantity in tissues as well as its high affinity for dioxygen, which may limit its oxygen-releasing ability, argue against it. The ferrous/deoxygenated form exhibits a nitrite reductase activity and it could produce nitric oxide which in turn inhibits cellular respiration in response to hypoxia. In its ferrous/deoxygenated state, it may also exhibit GDI (Guanine nucleotide Dissociation Inhibitor) activity toward heterotrimeric G-alpha proteins, thereby regulating signal transduction to facilitate neuroprotective responses in the wake of hypoxia and associated oxidative stress. The chain is Neuroglobin from Oryctolagus cuniculus (Rabbit).